The following is a 144-amino-acid chain: Large ribosomal subunit protein uL11 (144 aa).

It belongs to the universal ribosomal protein uL11 family. In terms of assembly, part of the ribosomal stalk of the 50S ribosomal subunit. Interacts with L10 and the large rRNA to form the base of the stalk. L10 forms an elongated spine to which L12 dimers bind in a sequential fashion forming a multimeric L10(L12)X complex. One or more lysine residues are methylated.

Functionally, forms part of the ribosomal stalk which helps the ribosome interact with GTP-bound translation factors. The chain is Large ribosomal subunit protein uL11 from Legionella pneumophila (strain Paris).